The sequence spans 580 residues: Rap guanine nucleotide exchange factor 5 (580 aa).

Positions 67–200 constitute an N-terminal Ras-GEF domain; it reads DRYVVVSGTP…ELKEFQKILG (134 aa). Residues 344 to 579 enclose the Ras-GEF domain; it reads NTWDLALELM…FELSHRLEPR (236 aa).

In the embryo, expressed in young neurons of the developing telencephalon, diencephalon and hindbrain. Not expressed in progenitor cells in the ventricular zone.

The protein resides in the nucleus. Guanine nucleotide exchange factor (GEF) for RAP1A, RAP2A and MRAS/M-Ras-GTP. Its association with MRAS inhibits Rap1 activation. The chain is Rap guanine nucleotide exchange factor 5 (Rapgef5) from Rattus norvegicus (Rat).